Consider the following 422-residue polypeptide: UDP-N-acetylglucosamine 1-carboxyvinyltransferase (422 aa).

22–23 (KN) provides a ligand contact to phosphoenolpyruvate. R92 is a UDP-N-acetyl-alpha-D-glucosamine binding site. C116 functions as the Proton donor in the catalytic mechanism. C116 carries the 2-(S-cysteinyl)pyruvic acid O-phosphothioketal modification. Residues 121–125 (RPVDQ), D305, and I327 each bind UDP-N-acetyl-alpha-D-glucosamine.

The protein belongs to the EPSP synthase family. MurA subfamily.

The protein resides in the cytoplasm. The enzyme catalyses phosphoenolpyruvate + UDP-N-acetyl-alpha-D-glucosamine = UDP-N-acetyl-3-O-(1-carboxyvinyl)-alpha-D-glucosamine + phosphate. Its pathway is cell wall biogenesis; peptidoglycan biosynthesis. Its function is as follows. Cell wall formation. Adds enolpyruvyl to UDP-N-acetylglucosamine. The polypeptide is UDP-N-acetylglucosamine 1-carboxyvinyltransferase (Sorangium cellulosum (strain So ce56) (Polyangium cellulosum (strain So ce56))).